A 60-amino-acid chain; its full sequence is Large ribosomal subunit protein bL32 (60 aa).

Belongs to the bacterial ribosomal protein bL32 family.

This Ruminiclostridium cellulolyticum (strain ATCC 35319 / DSM 5812 / JCM 6584 / H10) (Clostridium cellulolyticum) protein is Large ribosomal subunit protein bL32.